A 1963-amino-acid polypeptide reads, in one-letter code: Immunoglobulin A1 protease (1963 aa).

The first 36 residues, 1–36 (MEKYFGEKQERFSFRKLSVGLVSATISSLFFMSVLA), serve as a signal peptide directing secretion. Positions 37–99 (SSSVDAQETA…QNQLAELPNT (63 aa)) are excised as a propeptide. The short motif at 96–100 (LPNTG) is the LPXTG sorting signal element. T99 carries the pentaglycyl murein peptidoglycan amidated threonine modification. The next 2 helical transmembrane spans lie at 106–125 (QALV…FAVS) and 132–154 (KTVL…VHAL). The Extracellular segment spans residues 155-1963 (ENHLLLNYNT…FRSSIFENKK (1809 aa)). Positions 253–305 (KPFSTELINPRKEEKQSSDSQEQLAEHKNLETKKEEKISPKEKTGVNTLNPQD) are disordered. Residues 276 to 296 (LAEHKNLETKKEEKISPKEKT) are compositionally biased toward basic and acidic residues. Residues 314–393 (KPELLYREET…PRIVEKGTKK (80 aa)) form the G5 domain. Positions 402 to 681 (ETGVEHKDVQ…GQTEPEKKLE (280 aa)) are disordered. 3 repeat units span residues 419–435 (AIQP…KGEP), 436–452 (EVQP…KGET), and 453–469 (EVQP…KGEP). Positions 419–469 (AIQPELPEAVVSDKGEPEVQPTLPEAVVTDKGETEVQPESPDTVVSDKGEP) are 3 X 17 AA approximate tandem repeats. The segment covering 485 to 511 (VKPETPVEKTKEQGPEKTEEVPVKPTE) has biased composition (basic and acidic residues). Polar residues-rich tracts occupy residues 516-529 (NPNE…SIQE) and 538-572 (EEST…SVGE). Residues 574–591 (NKPEHNDSKNENSEKTVE) show a composition bias toward basic and acidic residues. Polar residues-rich tracts occupy residues 618-639 (EETQ…SNKP) and 648-674 (ESNQ…NGQT). H1604 contributes to the Zn(2+) binding site. Residue E1605 is part of the active site. Zn(2+) contacts are provided by H1608 and E1628.

This sequence belongs to the peptidase M26 family. Zn(2+) is required as a cofactor. In terms of processing, the Gram-positive cell-wall anchor motif LPXTG is located in the N-terminal part, in contrast to such motifs in other known streptococcal and staphylococcal proteins. The protease could be cleaved by the sortase and anchored in the membrane via the two potential N-terminal transmembrane domains, whereas the propeptide located prior to the LPXTG motif would remain attached to the cell wall peptidoglycan by an amide bond.

It is found in the secreted. The protein localises to the cell wall. It localises to the membrane. It carries out the reaction Cleavage of Pro-|-Thr bond in the hinge region of the heavy chain of human IgA.. In terms of biological role, zinc metalloproteinase which cleaves human immunoglobulin A1 (IgA1) in the hinge region. This Streptococcus pneumoniae (strain ATCC BAA-255 / R6) protein is Immunoglobulin A1 protease (iga).